A 401-amino-acid polypeptide reads, in one-letter code: Argininosuccinate synthase (401 aa).

Residues 7–15 (AYSGGLDTS) and Ala-34 each bind ATP. The L-citrulline site is built by Tyr-85 and Ser-90. An ATP-binding site is contributed by Gly-115. L-aspartate is bound by residues Thr-117, Asn-121, and Asp-122. Asn-121 serves as a coordination point for L-citrulline. Residues Arg-125, Ser-174, Ser-183, Glu-259, and Tyr-271 each contribute to the L-citrulline site.

The protein belongs to the argininosuccinate synthase family. Type 1 subfamily. In terms of assembly, homotetramer.

It localises to the cytoplasm. The catalysed reaction is L-citrulline + L-aspartate + ATP = 2-(N(omega)-L-arginino)succinate + AMP + diphosphate + H(+). Its pathway is amino-acid biosynthesis; L-arginine biosynthesis; L-arginine from L-ornithine and carbamoyl phosphate: step 2/3. The polypeptide is Argininosuccinate synthase (Pelotomaculum thermopropionicum (strain DSM 13744 / JCM 10971 / SI)).